Reading from the N-terminus, the 393-residue chain is MTTIGTPLRPNATKVMMLGSGELGKEVVIELQRLGVEVIAVDRYENAPAQQVAHRAYTISMLDGAALRALAEKEKPDFIVPEVEAIATATLVELEQEGYNVVPTAKATQLTMNREGIRRLAAEELGLKTSPYRFVDNLEDFKQAVAEIGIPCVVKPIMSSSGHGQSVIKSEDQIQQAWDYSQEGGRAGGGRVIVEGFIKFDYEITQLTVRHVNGTSFLAPIGHRQEDGDYRESWQPQAMSDLALKRAQETAERITTALGGRGIFGVELFVCGDEIIFNEVSPRPHDTGMVTMASQELSQFALHARAILGLPISEIYQISPAASKAIVVEGKSNNMTFGNLDKVLEEIGTNIRLFGKGEVNGHRRLGVILARDENTEKALAKAERAYAKLAVQL.

N(1)-(5-phospho-beta-D-ribosyl)glycinamide contacts are provided by residues 22–23 and Glu82; that span reads EL. ATP contacts are provided by residues Arg114, Lys155, 160-165, 195-198, and Glu203; these read SSGHGQ and EGFI. Residues 119-308 form the ATP-grasp domain; that stretch reads RLAAEELGLK…QFALHARAIL (190 aa). Mg(2+)-binding residues include Glu267 and Glu279. Residues Asp286, Lys356, and 363–364 contribute to the N(1)-(5-phospho-beta-D-ribosyl)glycinamide site; that span reads RR.

It belongs to the PurK/PurT family. In terms of assembly, homodimer.

The enzyme catalyses N(1)-(5-phospho-beta-D-ribosyl)glycinamide + formate + ATP = N(2)-formyl-N(1)-(5-phospho-beta-D-ribosyl)glycinamide + ADP + phosphate + H(+). It participates in purine metabolism; IMP biosynthesis via de novo pathway; N(2)-formyl-N(1)-(5-phospho-D-ribosyl)glycinamide from N(1)-(5-phospho-D-ribosyl)glycinamide (formate route): step 1/1. Its function is as follows. Involved in the de novo purine biosynthesis. Catalyzes the transfer of formate to 5-phospho-ribosyl-glycinamide (GAR), producing 5-phospho-ribosyl-N-formylglycinamide (FGAR). Formate is provided by PurU via hydrolysis of 10-formyl-tetrahydrofolate. In Actinobacillus pleuropneumoniae serotype 3 (strain JL03), this protein is Formate-dependent phosphoribosylglycinamide formyltransferase.